The chain runs to 445 residues: C4-dicarboxylate transport protein (445 aa).

8 helical membrane passes run 24-44 (VLYI…WLSP), 62-82 (LIKM…IAHI), 105-125 (FALI…GLAA), 163-183 (GDIL…MALG), 201-221 (FGVI…AMAF), 237-257 (LVAL…GVIA), 322-342 (IYMT…LSFS), and 370-390 (AGTL…VFSI).

This sequence belongs to the dicarboxylate/amino acid:cation symporter (DAACS) (TC 2.A.23) family.

The protein localises to the cell inner membrane. Its function is as follows. Responsible for the transport of dicarboxylates such as succinate, fumarate, and malate from the periplasm across the membrane. The chain is C4-dicarboxylate transport protein from Rhodopseudomonas palustris (strain HaA2).